The primary structure comprises 239 residues: mRNA turnover protein 4 homolog (239 aa).

The disordered stretch occupies residues 216 to 239; the sequence is QQMGDDLPESAPESEGESEEEDDS. Residues 221–239 are compositionally biased toward acidic residues; that stretch reads DLPESAPESEGESEEEDDS. 3 positions are modified to phosphoserine: Ser-225, Ser-229, and Ser-233.

Belongs to the universal ribosomal protein uL10 family. Associates with the pre-60S ribosomal particle. Interacts with MINAS-60 (product of an alternative open reading frame of RBM10).

The protein resides in the nucleus. It is found in the nucleolus. Its subcellular location is the cytoplasm. Component of the ribosome assembly machinery. Nuclear paralog of the ribosomal protein P0, it binds pre-60S subunits at an early stage of assembly in the nucleolus, and is replaced by P0 in cytoplasmic pre-60S subunits and mature 80S ribosomes. The chain is mRNA turnover protein 4 homolog (MRTO4) from Bos taurus (Bovine).